Reading from the N-terminus, the 1423-residue chain is Protein phosphatase Slingshot homolog 2 (1423 aa).

A disordered region spans residues Met-1 to Ile-37. Residues Ser-9 to Pro-18 are compositionally biased toward low complexity. Ser-17, Ser-25, and Ser-36 each carry phosphoserine. Residues Glu-248–Gly-303 enclose the DEK-C domain. A Tyrosine-protein phosphatase domain is found at Ser-307–Ala-448. The Phosphocysteine intermediate role is filled by Cys-392. Ser-461, Ser-487, Ser-534, Ser-631, and Ser-633 each carry phosphoserine. Disordered stretches follow at residues Thr-617–Glu-641, Gln-664–Asn-684, Pro-696–Ala-728, Glu-797–Pro-825, Glu-840–Tyr-862, Leu-877–Val-954, Phe-962–Glu-981, Thr-1019–Leu-1041, Ser-1070–Ser-1108, and Thr-1144–Ser-1179. Residues Lys-621 to Gln-635 show a composition bias toward pro residues. The span at Gln-664 to Gly-680 shows a compositional bias: basic and acidic residues. The segment covering Thr-889–Ser-904 has biased composition (polar residues). The span at Pro-910–Lys-932 shows a compositional bias: basic and acidic residues. Residues Glu-941–Thr-953 show a composition bias toward polar residues. The span at Thr-1019–Glu-1034 shows a compositional bias: polar residues. Over residues Thr-1144–Ser-1172 the composition is skewed to polar residues. Ser-1217 bears the Phosphoserine mark. Position 1422 is a phosphothreonine (Thr-1422).

It belongs to the protein-tyrosine phosphatase family. In terms of assembly, interacts with filamentous actin.

It localises to the cytoplasm. The protein resides in the cytoskeleton. It is found in the cell junction. The protein localises to the focal adhesion. Its subcellular location is the cytoplasmic vesicle. It localises to the secretory vesicle. The protein resides in the acrosome. The enzyme catalyses O-phospho-L-tyrosyl-[protein] + H2O = L-tyrosyl-[protein] + phosphate. It carries out the reaction O-phospho-L-seryl-[protein] + H2O = L-seryl-[protein] + phosphate. The catalysed reaction is O-phospho-L-threonyl-[protein] + H2O = L-threonyl-[protein] + phosphate. Functionally, protein phosphatase which regulates actin filament dynamics. Dephosphorylates and activates the actin binding/depolymerizing factor cofilin, which subsequently binds to actin filaments and stimulates their disassembly. Inhibitory phosphorylation of cofilin is mediated by LIMK1, which may also be dephosphorylated and inactivated by this protein. Required for spermatogenesis. Involved in acrosome biogenesis, probably by regulating cofilin-mediated actin cytoskeleton remodeling during proacrosomal vesicle fusion and/or Golgi to perinuclear vesicle trafficking. This is Protein phosphatase Slingshot homolog 2 (SSH2) from Homo sapiens (Human).